A 143-amino-acid chain; its full sequence is Acetyltransferase plu1384 (143 aa).

The N-acetyltransferase domain occupies 1 to 138 (MEIRVFRQDD…ESVIFSKRLI (138 aa)).

It belongs to the acetyltransferase family. YpeA subfamily.

The protein is Acetyltransferase plu1384 of Photorhabdus laumondii subsp. laumondii (strain DSM 15139 / CIP 105565 / TT01) (Photorhabdus luminescens subsp. laumondii).